We begin with the raw amino-acid sequence, 356 residues long: Phosphoserine aminotransferase (356 aa).

Arginine 41 provides a ligand contact to L-glutamate. Pyridoxal 5'-phosphate-binding positions include 76–77 (AS), tryptophan 102, threonine 150, aspartate 169, and glutamine 192. Residue lysine 193 is modified to N6-(pyridoxal phosphate)lysine. 234-235 (NT) contributes to the pyridoxal 5'-phosphate binding site.

It belongs to the class-V pyridoxal-phosphate-dependent aminotransferase family. SerC subfamily. Homodimer. It depends on pyridoxal 5'-phosphate as a cofactor.

It is found in the cytoplasm. It carries out the reaction O-phospho-L-serine + 2-oxoglutarate = 3-phosphooxypyruvate + L-glutamate. The enzyme catalyses 4-(phosphooxy)-L-threonine + 2-oxoglutarate = (R)-3-hydroxy-2-oxo-4-phosphooxybutanoate + L-glutamate. It participates in amino-acid biosynthesis; L-serine biosynthesis; L-serine from 3-phospho-D-glycerate: step 2/3. The protein operates within cofactor biosynthesis; pyridoxine 5'-phosphate biosynthesis; pyridoxine 5'-phosphate from D-erythrose 4-phosphate: step 3/5. Functionally, catalyzes the reversible conversion of 3-phosphohydroxypyruvate to phosphoserine and of 3-hydroxy-2-oxo-4-phosphonooxybutanoate to phosphohydroxythreonine. The sequence is that of Phosphoserine aminotransferase from Flavobacterium psychrophilum (strain ATCC 49511 / DSM 21280 / CIP 103535 / JIP02/86).